Consider the following 367-residue polypeptide: Probable alcohol dehydrogenase adh (367 aa).

The Zn(2+) site is built by cysteine 43, histidine 64, cysteine 97, cysteine 100, cysteine 103, cysteine 111, and asparagine 163.

This sequence belongs to the zinc-containing alcohol dehydrogenase family. Zn(2+) is required as a cofactor.

It catalyses the reaction a primary alcohol + NAD(+) = an aldehyde + NADH + H(+). It carries out the reaction a secondary alcohol + NAD(+) = a ketone + NADH + H(+). This chain is Probable alcohol dehydrogenase adh (adh), found in Mycobacterium tuberculosis (strain CDC 1551 / Oshkosh).